Consider the following 311-residue polypeptide: p-hydroxybenzoic acid efflux pump subunit AaeA (311 aa).

The chain crosses the membrane as a helical span at residues 11–31 (VGITVLVVVLAVIAIFNVWAF).

This sequence belongs to the membrane fusion protein (MFP) (TC 8.A.1) family.

It localises to the cell inner membrane. Its function is as follows. Forms an efflux pump with AaeB. This Yersinia pestis bv. Antiqua (strain Antiqua) protein is p-hydroxybenzoic acid efflux pump subunit AaeA.